The primary structure comprises 113 residues: TYRO protein tyrosine kinase-binding protein (113 aa).

Positions 1 to 27 (MGGLEPCSRLLLLPLLLAVGGLRPVQA) are cleaved as a signal peptide. Residues 28-40 (QAQSDCSCSTVSP) lie on the Extracellular side of the membrane. A helical membrane pass occupies residues 41-61 (GVLAGIVMGDLVLTVLIALAV). Aspartate 50 contributes to the Ca(2+) binding site. The Cytoplasmic portion of the chain corresponds to 62-113 (YFLGRLVHRGRGAAEAATRKQRITETESPYQELQGQRSDVYSDLNMQRPYYK). The interval 75 to 113 (AEAATRKQRITETESPYQELQGQRSDVYSDLNMQRPYYK) is disordered. In terms of domain architecture, ITAM spans 80 to 108 (RKQRITETESPYQELQGQRSDVYSDLNMQ). Residues 87–100 (TESPYQELQGQRSD) show a composition bias toward polar residues. Phosphotyrosine is present on residues tyrosine 91 and tyrosine 102.

The protein belongs to the TYROBP family. Homodimer; disulfide-linked. Homotrimer; disulfide-linked. Homotetramer; disulfide-linked. Homotrimers and homotetramers form when low levels of partner receptors are available and is competitive with assembly with interacting receptors. They may represent alternative oligomerization states or may be intermediates in the receptor assembly process. Binding of a metal cation aids in homooligomerization through coordination of the metal ion by the subunits of the oligomer. Interacts with TREM1. Interacts with TREM2. Interacts with CLECSF5. Interacts with CD300LB and CD300C2. Interacts with CD300E. Interacts (via ITAM domain) with SYK (via SH2 domains); activates SYK mediating neutrophils and macrophages integrin-mediated activation. Interacts with KLRC2. Interacts with CD300H. Interacts with KLRD1. Interacts with SIGLEC1. Post-translationally, following ligand binding by associated receptors, tyrosine phosphorylated in the ITAM domain which leads to activation of additional tyrosine kinases and subsequent cell activation.

It localises to the cell membrane. Its function is as follows. Adapter protein which non-covalently associates with activating receptors found on the surface of a variety of immune cells to mediate signaling and cell activation following ligand binding by the receptors. TYROBP is tyrosine-phosphorylated in the ITAM domain following ligand binding by the associated receptors which leads to activation of additional tyrosine kinases and subsequent cell activation. Also has an inhibitory role in some cells. Non-covalently associates with activating receptors of the CD300 family to mediate cell activation. Also mediates cell activation through association with activating receptors of the CD200R family. Required for neutrophil activation mediated by integrin. Required for the activation of myeloid cells mediated by the CLEC5A/MDL1 receptor. Associates with natural killer (NK) cell receptors such as the KLRD1/KLRC2 heterodimer to mediate NK cell activation. Associates with TREM1 to mediate activation of neutrophils and monocytes. Associates with TREM2 on monocyte-derived dendritic cells to mediate up-regulation of chemokine receptor CCR7 and dendritic cell maturation and survival. Association with TREM2 mediates cytokine-induced formation of multinucleated giant cells which are formed by the fusion of macrophages. Stabilizes the TREM2 C-terminal fragment (TREM2-CTF) produced by TREM2 ectodomain shedding which suppresses the release of pro-inflammatory cytokines. In microglia, required with TREM2 for phagocytosis of apoptotic neurons. Required with ITGAM/CD11B in microglia to control production of microglial superoxide ions which promote the neuronal apoptosis that occurs during brain development. Promotes pro-inflammatory responses in microglia following nerve injury which accelerates degeneration of injured neurons. Positively regulates the expression of the IRAK3/IRAK-M kinase and IL10 production by liver dendritic cells and inhibits their T cell allosimulatory ability. Negatively regulates B cell proliferation. Required for CSF1-mediated osteoclast cytoskeletal organization. Positively regulates multinucleation during osteoclast development. The sequence is that of TYRO protein tyrosine kinase-binding protein from Pan troglodytes (Chimpanzee).